A 492-amino-acid chain; its full sequence is Cytochrome P450 monooxygenase MYCFIDRAFT_204672 (492 aa).

N-linked (GlcNAc...) asparagine glycosylation occurs at Asn-116. The helical transmembrane segment at 269 to 293 threads the bilayer; sequence FLISMIFISAANGCVVSGAMLYSIA. Residue Asn-335 is glycosylated (N-linked (GlcNAc...) asparagine). Residue Cys-430 coordinates heme.

This sequence belongs to the cytochrome P450 family. Heme serves as cofactor.

Its subcellular location is the membrane. The protein operates within secondary metabolite biosynthesis. Cytochrome P450 monooxygenase; part of the gene cluster that mediates the biosynthesis of an emodin derivative that may be involved in black Sigatoka disease of banana. The pathway begins with the synthesis of atrochrysone thioester by the polyketide synthase PKS8-1. The atrochrysone carboxyl ACP thioesterase MYCFIDRAFT_190111 then breaks the thioester bond and releases the atrochrysone carboxylic acid from PKS8-1. The decarboxylase MYCFIDRAFT_34057 then catalyzes the concerted decarboxylation-elimination required to convert atochrysone carboxylic acid into emodin anthrone, which is further oxidized to emodin by the anthrone oxygenase MYCFIDRAFT_34418. The functions of the other tailoring enzymes as well as the final product of the cluster have still to be identified. The chain is Cytochrome P450 monooxygenase MYCFIDRAFT_204672 from Pseudocercospora fijiensis (strain CIRAD86) (Black leaf streak disease fungus).